Here is a 164-residue protein sequence, read N- to C-terminus: MQVILLQRIVNLGKLGETVDVKSGYGRNYLIPQGKALPATPANVEKFEARRAELEAIEAEELAAANKRAEALTDVNVIMRAKSGEDGKLFGSIGTRDIADALTKSGLEVDRAEVKLPEGTLRQVGEYNVDIQLHHDIFASILVTILSEDGDVEAAQQEAEEDAE.

The protein belongs to the bacterial ribosomal protein bL9 family.

Its function is as follows. Binds to the 23S rRNA. This is Large ribosomal subunit protein bL9 from Psychrobacter sp. (strain PRwf-1).